Consider the following 572-residue polypeptide: Urease subunit alpha (572 aa).

The 439-residue stretch at 134–572 (AGIDTHIHLI…AAMNQLYFFG (439 aa)) folds into the Urease domain. Positions 139, 141, and 222 each coordinate Ni(2+). Lys-222 is modified (N6-carboxylysine). His-224 is a substrate binding site. Ni(2+)-binding residues include His-251 and His-277. Catalysis depends on His-325, which acts as the Proton donor. Residue Asp-365 participates in Ni(2+) binding.

It belongs to the metallo-dependent hydrolases superfamily. Urease alpha subunit family. In terms of assembly, heterotrimer of UreA (gamma), UreB (beta) and UreC (alpha) subunits. Three heterotrimers associate to form the active enzyme. Ni cation serves as cofactor. Post-translationally, carboxylation allows a single lysine to coordinate two nickel ions.

Its subcellular location is the cytoplasm. The enzyme catalyses urea + 2 H2O + H(+) = hydrogencarbonate + 2 NH4(+). It participates in nitrogen metabolism; urea degradation; CO(2) and NH(3) from urea (urease route): step 1/1. The polypeptide is Urease subunit alpha (Edwardsiella ictaluri (strain 93-146)).